The sequence spans 178 residues: uncharacterized protein (178 aa).

Belongs to the mycobacterial PPE family.

This is an uncharacterized protein from Mycobacterium tuberculosis (strain CDC 1551 / Oshkosh).